Here is a 95-residue protein sequence, read N- to C-terminus: MARSIKKGPFVDDFLVKKIEDMIKTNKKAVVKTWSRRSTILPEFVGHTFAVHNGKKFIPVFVTENMVGHKLGEFAPTRTFGGHSAEKKVAKAPGK.

This sequence belongs to the universal ribosomal protein uS19 family.

In terms of biological role, protein S19 forms a complex with S13 that binds strongly to the 16S ribosomal RNA. In Myxococcus xanthus (strain DK1622), this protein is Small ribosomal subunit protein uS19.